We begin with the raw amino-acid sequence, 21 residues long: Protein IroK (21 aa).

Functionally, possible increased expression of this protein (due to mutations upstream of the start codon) is proposed to be responsible for resistance to 3-hydroxypropionic acid (3-HP). The sequence is that of Protein IroK (iroK) from Escherichia coli (strain K12).